Reading from the N-terminus, the 537-residue chain is Cytochrome c oxidase subunit 1 (537 aa).

Residues 22-42 (ILYLLFGLVSGIIGSVFSFII) traverse the membrane as a helical segment. Residues Glu-45, Ala-48, and Gly-50 each contribute to the Ca(2+) site. Fe(II)-heme a is bound at residue His-68. A run of 8 helical transmembrane segments spans residues 70–90 (ILMI…NYLV), 104–124 (VNNF…ISAL), 152–172 (LAIL…VNLI), 190–210 (LFAW…PVLA), 241–261 (LFWF…FGVV), 279–299 (MLWA…HHLF), 318–338 (IAIP…GGAI), and 345–365 (MLYA…GVIL). Residue His-247 participates in Cu cation binding. Residues 247-251 (HPEVY) constitute a cross-link (1'-histidyl-3'-tyrosine (His-Tyr)). Tyr-251 serves as a coordination point for O2. 2 residues coordinate Cu cation: His-296 and His-297. Mg(2+) contacts are provided by His-375 and Asp-376. 2 consecutive transmembrane segments (helical) span residues 379-399 (FVVA…LCGA) and 418-438 (IQFW…HFLG). His-383 lines the heme a3 pocket. His-385 serves as a coordination point for Fe(II)-heme a. Ca(2+) is bound at residue Pro-447. The helical transmembrane segment at 458-478 (FVSSIGSVISILSLFLFMYVM) threads the bilayer.

It belongs to the heme-copper respiratory oxidase family. In terms of assembly, component of the cytochrome c oxidase (complex IV, CIV), a multisubunit enzyme composed of a catalytic core of 3 subunits and several supernumerary subunits. The complex exists as a monomer or a dimer and forms supercomplexes (SCs) in the inner mitochondrial membrane with ubiquinol-cytochrome c oxidoreductase (cytochrome b-c1 complex, complex III, CIII). Heme is required as a cofactor. Requires Cu cation as cofactor.

It localises to the mitochondrion inner membrane. The catalysed reaction is 4 Fe(II)-[cytochrome c] + O2 + 8 H(+)(in) = 4 Fe(III)-[cytochrome c] + 2 H2O + 4 H(+)(out). The protein operates within energy metabolism; oxidative phosphorylation. Its function is as follows. Component of the cytochrome c oxidase, the last enzyme in the mitochondrial electron transport chain which drives oxidative phosphorylation. The respiratory chain contains 3 multisubunit complexes succinate dehydrogenase (complex II, CII), ubiquinol-cytochrome c oxidoreductase (cytochrome b-c1 complex, complex III, CIII) and cytochrome c oxidase (complex IV, CIV), that cooperate to transfer electrons derived from NADH and succinate to molecular oxygen, creating an electrochemical gradient over the inner membrane that drives transmembrane transport and the ATP synthase. Cytochrome c oxidase is the component of the respiratory chain that catalyzes the reduction of oxygen to water. Electrons originating from reduced cytochrome c in the intermembrane space (IMS) are transferred via the dinuclear copper A center (CU(A)) of subunit 2 and heme A of subunit 1 to the active site in subunit 1, a binuclear center (BNC) formed by heme A3 and copper B (CU(B)). The BNC reduces molecular oxygen to 2 water molecules using 4 electrons from cytochrome c in the IMS and 4 protons from the mitochondrial matrix. This Schizosaccharomyces pombe (strain 972 / ATCC 24843) (Fission yeast) protein is Cytochrome c oxidase subunit 1 (cox1).